The sequence spans 149 residues: Cell division protein SepF (149 aa).

The protein belongs to the SepF family. As to quaternary structure, homodimer. Interacts with FtsZ.

Its subcellular location is the cytoplasm. Cell division protein that is part of the divisome complex and is recruited early to the Z-ring. Probably stimulates Z-ring formation, perhaps through the cross-linking of FtsZ protofilaments. Its function overlaps with FtsA. The polypeptide is Cell division protein SepF (Pelotomaculum thermopropionicum (strain DSM 13744 / JCM 10971 / SI)).